The chain runs to 241 residues: Major microneme antigen (241 aa).

The first 34 residues, 1-34 (MTLPIHFPRCVLYGMASAVWSILFLHILVGDTMS), serve as a signal peptide directing secretion. The propeptide occupies 35–103 (AADALSWSGG…ATGRGPSFVH (69 aa)). Residues 64–83 (GKELEQQHGGEEQQMQRDTK) are compositionally biased toward basic and acidic residues. Residues 64 to 90 (GKELEQQHGGEEQQMQRDTKPAAFSNP) form a disordered region. 2 PAN domains span residues 112–181 (CFPH…PRSC) and 185–241 (CTDN…VERA). 6 disulfide bridges follow: Cys-112-Cys-181, Cys-137-Cys-159, Cys-141-Cys-147, Cys-185-Cys-189, Cys-210-Cys-230, and Cys-214-Cys-220. Ser-121 is a binding site for a carbohydrate. The a carbohydrate site is built by Lys-162, Tyr-169, and Asp-174.

Belongs to the microneme antigen family. In terms of assembly, homodimer or heterodimer of major microneme antigen and microneme antigen. In terms of processing, contains six disulfide bonds.

The protein resides in the cytoplasmic vesicle. Its subcellular location is the secretory vesicle. It is found in the microneme. Its function is as follows. Galactose-binding lectin. Plays a role in adhesion to the host cell. Has a potential role in invasion of host cells. The polypeptide is Major microneme antigen (Sarcocystis muris).